Reading from the N-terminus, the 517-residue chain is Urethanase (517 aa).

Residues lysine 98 and serine 173 each act as charge relay system in the active site. Serine 197 serves as the catalytic Acyl-ester intermediate.

Belongs to the amidase family. In terms of assembly, homooctamer.

It catalyses the reaction urethane + H2O + H(+) = ethanol + NH4(+) + CO2. With respect to regulation, exhibits poor salt tolerance but excellent tolerance to low concentrations of ethanol. EDTA has almost no impact on activity. Activity is increased in the presence of Ca(2+), Mg(2+) and Co(3+) and inhibited in the presence of Al(3+), Zn(2+) and Cu(2+). Functionally, hydrolase that can catalyze the degradation of ethyl carbamate (also called urethane), a probable human carcinogen widely found in alcoholic beverages. Can also use methyl carbamate, butyl carbamate, acetamide and urea. Also catalyzes the enantioselective hydrolysis of 2-phenylpropionamide, alpha-chlorophenylacetamide, 2-methyl-3-phenylpropionamide and alpha-methoxyphenylacetamide to the corresponding acids. Is inactive on benzamide and L-glutamine. This chain is Urethanase, found in Rhizobium radiobacter (Agrobacterium tumefaciens).